The primary structure comprises 146 residues: Large ribosomal subunit protein uL15 (146 aa).

The span at 1-10 (MKLHELKPAE) shows a compositional bias: basic and acidic residues. The segment at 1–51 (MKLHELKPAEGSRQVRNRVGRGTSSGNGKTAGRGQKGQKARSGGGVRLGFE) is disordered. Gly residues-rich tracts occupy residues 23-35 (TSSG…GRGQ) and 42-51 (SGGGVRLGFE).

Belongs to the universal ribosomal protein uL15 family. Part of the 50S ribosomal subunit.

Functionally, binds to the 23S rRNA. The protein is Large ribosomal subunit protein uL15 of Enterococcus faecalis (strain ATCC 700802 / V583).